The primary structure comprises 902 residues: Viral-enhancing factor (902 aa).

The region spanning 27-330 is the Peptidase M60 domain; the sequence is HRRTEVGVVL…IFAWLYNPQR (304 aa). N-linked (GlcNAc...) asparagine; by host glycosylation is found at Asn-73, Asn-265, Asn-278, Asn-339, Asn-540, Asn-593, Asn-594, Asn-620, Asn-782, and Asn-840.

Functionally, involved in disruption of the peritrophic membrane and fusion of nucleocapsids with midgut cells. The protein is Viral-enhancing factor (VEF) of Heliothis (HaGV).